A 234-amino-acid polypeptide reads, in one-letter code: Preprocaerulein type-4 (234 aa).

An N-terminal signal peptide occupies residues 1–26; it reads MFKGILLCVLFAVLSANPLSQPEGFA. The propeptide occupies 27–73; it reads DEEERDVRGLASLLGKALKAALKIGANALGGSPQQREANDERRFADG. Y77 carries the sulfotyrosine modification. F83 is modified (phenylalanine amide). A propeptide spanning residues 87–137 is cleaved from the precursor; that stretch reads DDEDDVNERDVRGFGSFLGKALKAGLKIGTHFLGGAPQQREANDERRFADG. Y141 bears the Sulfotyrosine mark. At F147 the chain carries Phenylalanine amide. Positions 151 to 152 are excised as a propeptide; sequence DG. Y156 bears the Sulfotyrosine mark. F162 carries the phenylalanine amide modification. Positions 166–216 are excised as a propeptide; that stretch reads DDEDDVHERDVRGFGSFLGKALKAALKIGANALGGSPQQREANDERRFADG. Residues 198 to 234 are disordered; the sequence is LGGSPQQREANDERRFADGQQDYTGWMDFGRRNGEDD. Sulfotyrosine is present on Y220. F226 carries the phenylalanine amide modification. The propeptide occupies 230-234; it reads NGEDD.

The protein belongs to the gastrin/cholecystokinin family. Expressed by the skin glands.

It localises to the secreted. In terms of biological role, the pharmacological activities of caerulein are quite similar to the physiological activities of gastrin and related peptides. This Xenopus borealis (Kenyan clawed frog) protein is Preprocaerulein type-4.